We begin with the raw amino-acid sequence, 902 residues long: Transcription factor FPSE_08121 (902 aa).

The segment at 1 to 47 (MVSPDNRPGTQGPSASAHAHDSRVPRKRPGSWDNNPSTAGNRAVKKR) is disordered. Positions 52–81 (CVSCRDRKVRCDVVNGGPPCTNCRLDDVDC) form a DNA-binding region, zn(2)-C6 fungal-type. Disordered regions lie at residues 92–189 (NPAR…EAEQ), 208–234 (HCEQ…PANP), 258–277 (ATEA…SANT), and 820–839 (TGVA…PNMT). The segment covering 120–137 (TDADTAAPGPAPGSASAT) has biased composition (low complexity). The segment covering 168-177 (ETICDDDENE) has biased composition (acidic residues). 4 stretches are compositionally biased toward polar residues: residues 178-187 (NNSWHNQQEA), 220-234 (GAAT…PANP), 262-277 (PPSS…SANT), and 826-839 (GQRS…PNMT).

It localises to the nucleus. Its function is as follows. Transcription factor; part of the Fusarium detoxification of benzoxazolinone cluster involved in the degradation of benzoxazolinones produced by the host plant. Maize, wheat, and rye produce the 2 benzoxazinone phytoanticipins 2,4-dihy-droxy-7-methoxy-1,4-benzoxazin-3-one (DIMBOA) and 2,4-dihydroxy-1,4-benzoxazin-3-one (DIBOA) that, due to their inherent instability once released, spontaneously degrade to the more stable corresponding benzoxazolinones, 6-methoxy-2-benzoxazolinone (MBOA) and 2-benzoxazolinone (BOA), respectively. FPSE_08121 positively regulates the expression of the FBD cluster gene FPSE_08120 in response to 2-aminophenol (2-AP) treatment and contributes quantitatively to benzoxazolinone tolerance. In Fusarium pseudograminearum (strain CS3096) (Wheat and barley crown-rot fungus), this protein is Transcription factor FPSE_08121.